The sequence spans 578 residues: Octopamine receptor 2 (578 aa).

Residues 1–84 lie on the Extracellular side of the membrane; it reads MMSFPIALFA…YDSITIFITV (84 aa). 4 N-linked (GlcNAc...) asparagine glycosylation sites follow: asparagine 13, asparagine 38, asparagine 46, and asparagine 59. The helical transmembrane segment at 85-107 threads the bilayer; it reads AVVLTLITLWTILGNFFVLMALY. Residues 108-117 lie on the Cytoplasmic side of the membrane; sequence RYGTLRTMSN. A helical membrane pass occupies residues 118 to 139; it reads CLIGNLAISDLLLAVTVLPIST. Residues 140-156 are Extracellular-facing; the sequence is VHDLLGYWVFGEFTCTL. Cysteine 154 and cysteine 239 form a disulfide bridge. A helical transmembrane segment spans residues 157 to 177; it reads WLCMDVLYCTASIWGLCTVAF. The Cytoplasmic segment spans residues 178–197; the sequence is DRYLATVYPVWYHDQRSVRK. A helical membrane pass occupies residues 198 to 220; sequence AVGCIVFVWIFSIVISFAPFIGW. Residues 221–251 are Extracellular-facing; it reads QHMIPSFFSFNASIQRYQCILFTSSSYVLYS. Asparagine 231 is a glycosylation site (N-linked (GlcNAc...) asparagine). The chain crosses the membrane as a helical span at residues 252–272; the sequence is SMGSFVIPAILMAFMYVRIFV. At 273–495 the chain is on the cytoplasmic side; the sequence is VLHNQSRGVK…ELREQRATKR (223 aa). The helical transmembrane segment at 496–517 threads the bilayer; that stretch reads MLLIMACFCVCWMPFLFMYILR. Residues 518-531 are Extracellular-facing; the sequence is SVCDTCHMNQHFVA. A helical membrane pass occupies residues 532–553; sequence AIIWLGYVNSSLNPVLYTLFND. Residues 554 to 578 lie on the Cytoplasmic side of the membrane; it reads DFKVAFKRLIGARSPSAYRSPGPRR.

The protein belongs to the G-protein coupled receptor 1 family.

It localises to the cell membrane. Its function is as follows. Receptor for octopamine. Octopamine (OA) is a neurotransmitter, neurohormone, and neuromodulator in invertebrates. This receptor induces a long lasting opening of voltage- independent chloride channels, a process which seems to involve protein phosphorylation but does not require either cAPK or PKC. The rank order of potency for agonists is p-synephrine &gt; p-octopamine &gt; xylometazoline &gt; B-HT920 &gt; norepinephrine = clonidine &gt; epinephrine &gt; p-tyramine &gt; phenylephrine = oxymetazoline = mehoxamine = dopamine &gt; serotonin &gt; histamine. For antagonists, the rank order is rauwolscine = mianserin &gt; phentolamine &gt; chlorpromazine &gt; spiperone &gt; yohimbine &gt; propanolol &gt; alprenolol &gt; prazosine &gt; pindolol. This is Octopamine receptor 2 from Lymnaea stagnalis (Great pond snail).